A 527-amino-acid polypeptide reads, in one-letter code: CTP synthase (527 aa).

The interval 1 to 270 is amidoligase domain; it reads MKYIFVTGGV…ADVLCQLLQL (270 aa). Serine 12 lines the CTP pocket. Serine 12 contacts UTP. ATP-binding positions include 13–18 and aspartate 70; that span reads GLGKGI. The Mg(2+) site is built by aspartate 70 and glutamate 145. Residues 152 to 154, 191 to 196, and lysine 227 contribute to the CTP site; these read DIE and KTKPTQ. UTP contacts are provided by residues 191-196 and lysine 227; that span reads KTKPTQ. The Glutamine amidotransferase type-1 domain maps to 292–525; the sequence is TIGIVSKYGK…VEACLKNRGK (234 aa). Glycine 349 contributes to the L-glutamine binding site. Catalysis depends on cysteine 376, which acts as the Nucleophile; for glutamine hydrolysis. Residues 377-380, glutamate 400, and arginine 455 contribute to the L-glutamine site; that span reads LGFQ. Active-site residues include histidine 498 and glutamate 500.

Belongs to the CTP synthase family. In terms of assembly, homotetramer.

It catalyses the reaction UTP + L-glutamine + ATP + H2O = CTP + L-glutamate + ADP + phosphate + 2 H(+). The catalysed reaction is L-glutamine + H2O = L-glutamate + NH4(+). The enzyme catalyses UTP + NH4(+) + ATP = CTP + ADP + phosphate + 2 H(+). The protein operates within pyrimidine metabolism; CTP biosynthesis via de novo pathway; CTP from UDP: step 2/2. Its activity is regulated as follows. Allosterically activated by GTP, when glutamine is the substrate; GTP has no effect on the reaction when ammonia is the substrate. The allosteric effector GTP functions by stabilizing the protein conformation that binds the tetrahedral intermediate(s) formed during glutamine hydrolysis. Inhibited by the product CTP, via allosteric rather than competitive inhibition. Catalyzes the ATP-dependent amination of UTP to CTP with either L-glutamine or ammonia as the source of nitrogen. Regulates intracellular CTP levels through interactions with the four ribonucleotide triphosphates. The sequence is that of CTP synthase from Methanospirillum hungatei JF-1 (strain ATCC 27890 / DSM 864 / NBRC 100397 / JF-1).